Here is an 860-residue protein sequence, read N- to C-terminus: Ubiquitin fusion degradation protein 3 homolog (860 aa).

WD repeat units lie at residues 27–65 (AHKSDTKALAVTQGGCLISGGRDETVKFWAKKGKQYTKT), 71–112 (PKGI…PYAI), 115–154 (EHKQNVCCLHINEKATHMLSGSWDSNVIIWPITELNSSSF), 163–203 (GHTL…SVFK), 204–242 (GHTDVVRALVVLSSSHFLSAGNDGHIIHWDVASASILRK), and 244–283 (ATQAHEFIYSMTLSDSHILTTGEDGTLEFWAIDGGKDGNL). A PFU domain is found at 397-497 (PIHYLEEITR…DKLSKGAASA (101 aa)). A disordered region spans residues 494–585 (AASAQSGYED…LPQNKKKPRG (92 aa)). In terms of domain architecture, PUL spans 586–856 (PLVPVPDFYI…KNIARDIVEM (271 aa)).

Belongs to the WD repeat PLAP family. In terms of assembly, interacts with cdc-48.1. In terms of tissue distribution, expressed in intestine (at protein level).

It localises to the cytoplasm. In terms of biological role, plays a role in protein ubiquitination, sorting and degradation through its association with cdc-48.1 and/or cdc-48.2. The polypeptide is Ubiquitin fusion degradation protein 3 homolog (Caenorhabditis elegans).